The following is a 395-amino-acid chain: Digeranylgeranylglycerophospholipid reductase (395 aa).

Positions 15, 34, 45, 46, 48, 97, 121, 276, and 288 each coordinate FAD. A 2,3-bis-O-(geranylgeranyl)-sn-glycerol 1-phospholipid contacts are provided by Arg329 and Gly365.

It belongs to the geranylgeranyl reductase family. DGGGPL reductase subfamily. Requires FAD as cofactor.

The catalysed reaction is a 2,3-bis-O-phytanyl-sn-glycerol 1-phospholipid + 8 A = a 2,3-bis-O-(geranylgeranyl)-sn-glycerol 1-phospholipid + 8 AH2. The enzyme catalyses 2,3-bis-O-(phytanyl)-sn-glycerol 1-phosphate + 8 A = 2,3-bis-O-(geranylgeranyl)-sn-glycerol 1-phosphate + 8 AH2. It catalyses the reaction CDP-2,3-bis-O-(geranylgeranyl)-sn-glycerol + 8 AH2 = CDP-2,3-bis-O-(phytanyl)-sn-glycerol + 8 A. It carries out the reaction archaetidylserine + 8 AH2 = 2,3-bis-O-phytanyl-sn-glycero-3-phospho-L-serine + 8 A. The protein operates within membrane lipid metabolism; glycerophospholipid metabolism. Is involved in the reduction of 2,3-digeranylgeranylglycerophospholipids (unsaturated archaeols) into 2,3-diphytanylglycerophospholipids (saturated archaeols) in the biosynthesis of archaeal membrane lipids. Catalyzes the formation of archaetidic acid (2,3-di-O-phytanyl-sn-glyceryl phosphate) from 2,3-di-O-geranylgeranylglyceryl phosphate (DGGGP) via the hydrogenation of each double bond of the isoprenoid chains. Is also probably able to reduce double bonds of geranyl groups in CDP-2,3-bis-O-(geranylgeranyl)-sn-glycerol and archaetidylserine, thus acting at various stages in the biosynthesis of archaeal membrane lipids. This chain is Digeranylgeranylglycerophospholipid reductase, found in Thermococcus gammatolerans (strain DSM 15229 / JCM 11827 / EJ3).